The sequence spans 536 residues: CBS domain-containing protein CBSCBSPB2 (536 aa).

Low complexity predominate over residues 1–23 (MTTTPTSSGRRSISSIRRTSSAS). Residues 1 to 60 (MTTTPTSSGRRSISSIRRTSSASKKPVLQSEESESGSGSINENTSKPDSPLAQPVSDGER) form a disordered region. CBS domains follow at residues 66–124 (RLSK…LRPE), 132–187 (MTRN…RMEK), 228–287 (VTEN…LSPE), and 295–354 (MTPN…NNSS). The 84-residue stretch at 406–489 (VSSFAFKFED…KVLRLHLDFT (84 aa)) folds into the PB1 domain. A helical transmembrane segment spans residues 509 to 529 (VWWQTGVLAGAIVLTSIGLFV).

The protein localises to the membrane. The chain is CBS domain-containing protein CBSCBSPB2 (CBSCBSPB2) from Arabidopsis thaliana (Mouse-ear cress).